The sequence spans 517 residues: Tyrosine-protein kinase Fgr (517 aa).

A lipid anchor (N-myristoyl glycine) is attached at G2. 2 S-palmitoyl cysteine lipidation sites follow: C3 and C6. S13 is subject to Phosphoserine. Phosphotyrosine is present on Y32. S50 is modified (phosphoserine). Positions 65-126 (TGVTIFVALY…PSNYVAPVDS (62 aa)) constitute an SH3 domain. An interaction with CLNK region spans residues 102 to 103 (WW). The region spanning 132 to 229 (WYFGKISRKD…GLCYLLTAPC (98 aa)) is the SH2 domain. Y196 is subject to Phosphotyrosine. S206 is subject to Phosphoserine. A Protein kinase domain is found at 251-504 (IALERRLGTG…YLQSFLEDYF (254 aa)). Residues 257-265 (LGTGCFGDV) and K279 contribute to the ATP site. D370 functions as the Proton acceptor in the catalytic mechanism. Phosphotyrosine is present on Y400. Position 511 is a phosphotyrosine; by SRC (Y511).

The protein belongs to the protein kinase superfamily. Tyr protein kinase family. SRC subfamily. As to quaternary structure, interacts with ITGB1, ITGB2, MS4A2/FCER1B, FCER1G and FCGR2. Interacts (via SH2 domain) with SYK (tyrosine phosphorylated). Interacts (via SH2 domain) with FLT3 (tyrosine phosphorylated). Interacts with PTK2/FAK1. Interacts (via SH2 domain) with HCLS1 (tyrosine phosphorylated by SYK). Interacts with SIRPA and PTPNS1. Interacts (not phosphorylated on tyrosine residues) with CBL; FGR tyrosine phosphorylation promotes dissociation. Interacts with CLNK. In terms of processing, ubiquitinated. Becomes ubiquitinated in response to ITGB2 signaling; this does not lead to degradation. Post-translationally, phosphorylated. Autophosphorylated on tyrosine residues. Becomes phosphorylated in response to FCGR2 engagement, cell adhesion and signaling by ITGB2. Prior phosphorylation at Tyr-511 by SRC inhibits ulterior autophosphorylation at Tyr-400. Expressed in natural killer cells (at protein level).

It is found in the cell membrane. Its subcellular location is the cell projection. The protein localises to the ruffle membrane. The protein resides in the cytoplasm. It localises to the cytosol. It is found in the cytoskeleton. Its subcellular location is the mitochondrion inner membrane. The protein localises to the mitochondrion intermembrane space. It carries out the reaction L-tyrosyl-[protein] + ATP = O-phospho-L-tyrosyl-[protein] + ADP + H(+). Activated by autophosphorylation. Prior phosphorylation at Tyr-511 by SRC inhibits ulterior autophosphorylation at Tyr-400. Activated by phorbol myristate acetate, phosphatidic acid and poly-Lys. Binding (via SH2 domain) of HCLS1 that is already phosphorylated by SYK strongly increases kinase activity. Its function is as follows. Non-receptor tyrosine-protein kinase that transmits signals from cell surface receptors devoid of kinase activity and contributes to the regulation of immune responses, including neutrophil, monocyte, macrophage and mast cell functions, cytoskeleton remodeling in response to extracellular stimuli, phagocytosis, cell adhesion and migration. Promotes mast cell degranulation, release of inflammatory cytokines and IgE-mediated anaphylaxis. Acts downstream of receptors that bind the Fc region of immunoglobulins, such as MS4A2/FCER1B, FCER1G and FCGR2. Acts downstream of ITGB1 and ITGB2, and regulates actin cytoskeleton reorganization, cell spreading and adhesion. Depending on the context, activates or inhibits cellular responses. Functions as a negative regulator of ITGB2 signaling, phagocytosis and SYK activity in monocytes. Required for normal ITGB1 and ITGB2 signaling, normal cell spreading and adhesion in neutrophils and macrophages. Functions as a positive regulator of cell migration and regulates cytoskeleton reorganization via RAC1 activation. Phosphorylates SYK (in vitro) and promotes SYK-dependent activation of AKT1 and MAP kinase signaling. Phosphorylates PLD2 in antigen-stimulated mast cells, leading to PLD2 activation and the production of the signaling molecules lysophosphatidic acid and diacylglycerol. Promotes activation of PIK3R1. Phosphorylates FASLG, and thereby regulates its ubiquitination and subsequent internalization. Phosphorylates ABL1. Promotes phosphorylation of CBL, CTTN, PIK3R1, PTK2/FAK1, PTK2B/PYK2 and VAV2. Phosphorylates HCLS1 that has already been phosphorylated by SYK, but not unphosphorylated HCLS1. Together with CLNK, it acts as a negative regulator of natural killer cell-activating receptors and inhibits interferon-gamma production. The polypeptide is Tyrosine-protein kinase Fgr (Fgr) (Mus musculus (Mouse)).